We begin with the raw amino-acid sequence, 4017 residues long: Hybrid PKS-NRPS synthetase cghG (4017 aa).

Residues 6–438 enclose the Ketosynthase family 3 (KS3) domain; the sequence is QEPIAVIGMA…GTNAHAIIES (433 aa). Active-site for beta-ketoacyl synthase activity residues include Cys-179, His-318, and His-358. The segment at 549 to 869 is malonyl-CoA:ACP transacylase (MAT) domain; that stretch reads VFTGQGAQWP…GRNKNDVVEL (321 aa). The tract at residues 936–1072 is N-terminal hotdog fold; it reads NPILGRRCVE…ATLHVRFHEP (137 aa). The region spanning 936-1243 is the PKS/mFAS DH domain; that stretch reads NPILGRRCVE…VKPFAAATAR (308 aa). The interval 937–1240 is dehydratase (DH) domain; the sequence is PILGRRCVET…AVQVKPFAAA (304 aa). The active-site Proton acceptor; for dehydratase activity is His-969. Residues 1087 to 1243 form a C-terminal hotdog fold region; it reads LVKTDPGRLY…VKPFAAATAR (157 aa). Asp-1147 functions as the Proton donor; for dehydratase activity in the catalytic mechanism. Positions 1398 to 1585 are methyltransferase (MT) domain; the sequence is VANVWIARMV…GVDTHCPVEK (188 aa). The ketoreductase (KR)domain stretch occupies residues 2127 to 2300; the sequence is TYFLVGLSGE…XXXXXXXXXX (174 aa). The Carrier 1 domain maps to 2423 to 2499; that stretch reads AVVQDSLTEN…SLAEEAMAKI (77 aa). O-(pantetheine 4'-phosphoryl)serine is present on Ser-2458. Disordered stretches follow at residues 2547–2606 and 2613–2632; these read VSEA…LQHR and WAGS…AQRH. The segment covering 2548-2578 has biased composition (polar residues); the sequence is SEASGVSATTPSTRAETDASSSPALVSTPGT. The segment at 2626 to 3020 is condensation; the sequence is RRAAQRHETL…GDAMETEKLQ (395 aa). Residues 3053–3453 are adenylation; that stretch reads EVIAQNPTAV…SGFLAIEGRI (401 aa). A disordered region spans residues 3567–3586; it reads PKTTTASTTADGTQPAQPLT. Residues 3569–3579 are compositionally biased toward low complexity; that stretch reads TTTASTTADGT. Residues 3583–3661 enclose the Carrier 2 domain; it reads QPLTPTESRL…SMAALLDQAG (79 aa). The segment at 3588–3658 is thiolation; it reads TESRLATLWA…ELGSMAALLD (71 aa). Ser-3621 bears the O-(pantetheine 4'-phosphoryl)serine mark. Residues 3696–3920 are reductase-like; that stretch reads VTGASGSLGK…DVGRLEDVAA (225 aa).

This sequence in the C-terminal section; belongs to the NRP synthetase family.

It catalyses the reaction (2S,4S)-4-hydroxy-4-methylglutamate + 8 malonyl-CoA + 3 S-adenosyl-L-methionine + ATP + 8 NADPH + 11 H(+) = (2S)-3-[(2S)-3,5-dioxo-4-[(2E,4R,6R,8E,10E,12E)-4,6,12-trimethyltetradeca-2,8,10,12-tetraenoyl]pyrrolidin-2-yl]-2-hydroxy-2-methylpropanoate + AMP + 3 S-adenosyl-L-homocysteine + 8 CO2 + diphosphate + 8 NADP(+) + 8 CoA + 6 H2O. It participates in secondary metabolite biosynthesis. Functionally, hybrid PKS-NRPS synthetase; part of the gene cluster that mediates the biosynthesis of the tetramic acid Sch210972, a potential anti-HIV fungal natural product that contains a decalin core. The PKS module of cghG together with the enoylreductase cghC catalyze the formation of the polyketide unit which is then conjugated to 4-hydroxyl-4-methyl glutamate (HMG) by the condensation domain of the cghG NRPS module. One unique structural feature of Sch210972 is the tetramic acid motif proposed to be derived from the non-proteinogenic amino acid HMG, by a Dieckmann-type condensation catalyzed by the reductase domain of cghG. The aldolase cghB catalyzes the aldol condensation of 2 molecules of pyruvic acid to yield the intermediate 4-hydroxyl-4-methyl-2-oxoglutarate (HMOG), which can then be stereoselectively transaminated by an unidentified enzyme to form HMG. The Diels-Alderase cghA then uses the Dieckmann product released by cghG as substrate and catalyzes the Diels-Alder cycloaddition to form the decalin ring of Sch210972. CghA also suppresses the nonenzymatic formation of the alternative stereoisomer. The protein is Hybrid PKS-NRPS synthetase cghG of Chaetomium globosum (strain ATCC 6205 / CBS 148.51 / DSM 1962 / NBRC 6347 / NRRL 1970) (Soil fungus).